The chain runs to 264 residues: Thymidylate synthase (264 aa).

A dUMP-binding site is contributed by R21. H51 provides a ligand contact to (6R)-5,10-methylene-5,6,7,8-tetrahydrofolate. A dUMP-binding site is contributed by 126–127 (RR). C146 (nucleophile) is an active-site residue. DUMP-binding positions include 166–169 (RSCD), N177, and 207–209 (HLY). D169 contacts (6R)-5,10-methylene-5,6,7,8-tetrahydrofolate. A263 is a (6R)-5,10-methylene-5,6,7,8-tetrahydrofolate binding site.

It belongs to the thymidylate synthase family. Bacterial-type ThyA subfamily. Homodimer.

Its subcellular location is the cytoplasm. The catalysed reaction is dUMP + (6R)-5,10-methylene-5,6,7,8-tetrahydrofolate = 7,8-dihydrofolate + dTMP. The protein operates within pyrimidine metabolism; dTTP biosynthesis. Its function is as follows. Catalyzes the reductive methylation of 2'-deoxyuridine-5'-monophosphate (dUMP) to 2'-deoxythymidine-5'-monophosphate (dTMP) while utilizing 5,10-methylenetetrahydrofolate (mTHF) as the methyl donor and reductant in the reaction, yielding dihydrofolate (DHF) as a by-product. This enzymatic reaction provides an intracellular de novo source of dTMP, an essential precursor for DNA biosynthesis. This is Thymidylate synthase from Serratia proteamaculans (strain 568).